A 99-amino-acid polypeptide reads, in one-letter code: MKLIFDIQLFAHKKAGGSTRNGRDSESKRLGVKRSDGQFVLAGNILVRQRGTKFHPGKNVGRGGDDTLFALVTGYVKFENKRGRKVVSVIPAEEMVAVQ.

Positions 1 to 10 are excised as a propeptide; that stretch reads MKLIFDIQLF.

Belongs to the bacterial ribosomal protein bL27 family. Post-translationally, the N-terminus is cleaved by ribosomal processing cysteine protease Prp.

This Caldicellulosiruptor bescii (strain ATCC BAA-1888 / DSM 6725 / KCTC 15123 / Z-1320) (Anaerocellum thermophilum) protein is Large ribosomal subunit protein bL27.